The sequence spans 137 residues: ATP synthase epsilon chain (137 aa).

Belongs to the ATPase epsilon chain family. As to quaternary structure, F-type ATPases have 2 components, CF(1) - the catalytic core - and CF(0) - the membrane proton channel. CF(1) has five subunits: alpha(3), beta(3), gamma(1), delta(1), epsilon(1). CF(0) has three main subunits: a, b and c.

It localises to the cell inner membrane. Its function is as follows. Produces ATP from ADP in the presence of a proton gradient across the membrane. This Pseudoalteromonas atlantica (strain T6c / ATCC BAA-1087) protein is ATP synthase epsilon chain.